Consider the following 166-residue polypeptide: Large ribosomal subunit protein uL10 (166 aa).

The protein belongs to the universal ribosomal protein uL10 family. Part of the ribosomal stalk of the 50S ribosomal subunit. The N-terminus interacts with L11 and the large rRNA to form the base of the stalk. The C-terminus forms an elongated spine to which L12 dimers bind in a sequential fashion forming a multimeric L10(L12)X complex.

Functionally, forms part of the ribosomal stalk, playing a central role in the interaction of the ribosome with GTP-bound translation factors. This Streptococcus equi subsp. zooepidemicus (strain MGCS10565) protein is Large ribosomal subunit protein uL10.